Here is a 558-residue protein sequence, read N- to C-terminus: Urocanate hydratase (558 aa).

NAD(+) contacts are provided by residues 50 to 51 (GG), Q128, 174 to 176 (GMG), E194, R199, 240 to 241 (NA), 261 to 265 (QTSAH), 271 to 272 (YI), and Y320. The active site involves C408. G490 is a binding site for NAD(+).

This sequence belongs to the urocanase family. NAD(+) serves as cofactor.

It localises to the cytoplasm. It carries out the reaction 4-imidazolone-5-propanoate = trans-urocanate + H2O. The protein operates within amino-acid degradation; L-histidine degradation into L-glutamate; N-formimidoyl-L-glutamate from L-histidine: step 2/3. Its function is as follows. Catalyzes the conversion of urocanate to 4-imidazolone-5-propionate. This is Urocanate hydratase from Deinococcus radiodurans (strain ATCC 13939 / DSM 20539 / JCM 16871 / CCUG 27074 / LMG 4051 / NBRC 15346 / NCIMB 9279 / VKM B-1422 / R1).